The following is a 198-amino-acid chain: Nucleoside triphosphate pyrophosphatase (198 aa).

Asp-72 (proton acceptor) is an active-site residue.

It belongs to the Maf family. A divalent metal cation serves as cofactor.

It is found in the cytoplasm. The enzyme catalyses a ribonucleoside 5'-triphosphate + H2O = a ribonucleoside 5'-phosphate + diphosphate + H(+). It carries out the reaction a 2'-deoxyribonucleoside 5'-triphosphate + H2O = a 2'-deoxyribonucleoside 5'-phosphate + diphosphate + H(+). In terms of biological role, nucleoside triphosphate pyrophosphatase. May have a dual role in cell division arrest and in preventing the incorporation of modified nucleotides into cellular nucleic acids. This Acinetobacter baylyi (strain ATCC 33305 / BD413 / ADP1) protein is Nucleoside triphosphate pyrophosphatase.